Reading from the N-terminus, the 126-residue chain is Putative lipoprotein LprD (126 aa).

The first 19 residues, 1 to 19, serve as a signal peptide directing secretion; it reads MSTTRRRRPALVALVTIAA. Residue Cys20 is the site of N-palmitoyl cysteine attachment. The S-diacylglycerol cysteine moiety is linked to residue Cys20. The chain crosses the membrane as a helical span at residues 44–64; it reads GYALQWPLFAGFCLYTYHNFV.

To M.tuberculosis Rv1343c.

It localises to the cell membrane. The polypeptide is Putative lipoprotein LprD (lprD) (Mycobacterium leprae (strain TN)).